Reading from the N-terminus, the 226-residue chain is MSFAESGWRSALRRRGPGTPGPVARPSYSSFTQGDSWGEGEVDEEEGCDQVARDLRAEFSAGAWSEPRKRSVLPPDGNGSPVLPDKRNGIFPAAAGSRAQPRRWPVQVLSILCSLLFAILLAFLLAIAYLIVKELHAENLKNEDDVDTGLLGFWTLLIISLTAGFSCCSFSWTVTYFDSFEPGMFPPTPLSPARFKKLTGHSFHMGYSMAILNGIVAALTVAWCLM.

The segment at 1-48 is disordered; it reads MSFAESGWRSALRRRGPGTPGPVARPSYSSFTQGDSWGEGEVDEEEGC. Phosphoserine occurs at positions 2 and 36. The segment covering 38–48 has biased composition (acidic residues); the sequence is GEGEVDEEEGC. 3 positions are modified to phosphoserine: S60, S65, and S80. A disordered region spans residues 66-85; the sequence is EPRKRSVLPPDGNGSPVLPD. A run of 3 helical transmembrane segments spans residues 111–131, 150–170, and 205–225; these read ILCS…AYLI, LLGF…CCSF, and MGYS…AWCL.

This sequence belongs to the ARL6IP6 family.

It localises to the nucleus inner membrane. In Homo sapiens (Human), this protein is ADP-ribosylation factor-like protein 6-interacting protein 6 (ARL6IP6).